Reading from the N-terminus, the 115-residue chain is NADH-ubiquinone oxidoreductase chain 3 (115 aa).

The next 3 helical transmembrane spans lie at 4–24 (IMVI…AFWL), 55–75 (FFLV…LLPI), and 86–106 (TMML…AYEW).

Belongs to the complex I subunit 3 family. As to quaternary structure, core subunit of respiratory chain NADH dehydrogenase (Complex I) which is composed of 45 different subunits. Interacts with TMEM186. Interacts with TMEM242.

It is found in the mitochondrion inner membrane. The catalysed reaction is a ubiquinone + NADH + 5 H(+)(in) = a ubiquinol + NAD(+) + 4 H(+)(out). In terms of biological role, core subunit of the mitochondrial membrane respiratory chain NADH dehydrogenase (Complex I) which catalyzes electron transfer from NADH through the respiratory chain, using ubiquinone as an electron acceptor. Essential for the catalytic activity of complex I. The protein is NADH-ubiquinone oxidoreductase chain 3 of Baiomys taylori (Northern pygmy mouse).